A 314-amino-acid polypeptide reads, in one-letter code: MVTETLSRKADYNANKLRKRLRRLVGTAIADFNMIEKGDRVMVCLSGGKDSYALLDILRNLQAHAPLDFELIAVNLDQKQPGFPEHVLPGYLSEINMPFRIVEQDTYSVVKRVIAEGKTTCSLCSRLRRGVLYRVATELGATKIALGHHRDDILETFFLNMFYGGKLKAMPPKLVSDDGCHVVIRPLAYCKEKDLAAYAWHAQFPIIPCNLCGSQPNLQRQVIKEMMQQWDKKYPGRLETMFTALQNIQLSHLADTSRYDFVGLKPHGIAIEEGDKAFDEEPLSVIPVDMDHDDDSTFEPENEHDGGAVQGGVI.

Residues 46–51 (SGGKDS) carry the PP-loop motif motif. [4Fe-4S] cluster is bound by residues Cys121, Cys124, and Cys212.

The protein belongs to the TtcA family. As to quaternary structure, homodimer. It depends on Mg(2+) as a cofactor. The cofactor is [4Fe-4S] cluster.

It is found in the cytoplasm. The catalysed reaction is cytidine(32) in tRNA + S-sulfanyl-L-cysteinyl-[cysteine desulfurase] + AH2 + ATP = 2-thiocytidine(32) in tRNA + L-cysteinyl-[cysteine desulfurase] + A + AMP + diphosphate + H(+). It participates in tRNA modification. Functionally, catalyzes the ATP-dependent 2-thiolation of cytidine in position 32 of tRNA, to form 2-thiocytidine (s(2)C32). The sulfur atoms are provided by the cysteine/cysteine desulfurase (IscS) system. The chain is tRNA-cytidine(32) 2-sulfurtransferase from Nitrosomonas europaea (strain ATCC 19718 / CIP 103999 / KCTC 2705 / NBRC 14298).